The primary structure comprises 1222 residues: MSLPERPGGISSEHRNAYRQSQSRRHRPADIEASSYYPVEGGRSSRHQPGLSANSFAETIPSPNNSFVENMPLSPTGERPAAPDQPFQRKRSLIRPERNRIDKDHPNYHYRKHAANMSTMPSATGNDPIAEDIEATTDVSGSRSQTLDGVSDTSPPRGHGSRPNSGEQEKKAPRSSAKRVSRHKSGKITKSTKKRSTPQEVIRPPSFWNVYCAIITFWCPDFMLKCFGMRSRAEQRAWREKMGLISLILLIMGCVGFITFGFTAVVCGSPPLRMRVNKVSDGYMIFHGTAYDLTRSGHPPAEGIPVPRGQRGANILWGMPGVDNRGKDGSFLFQNVNGRCKGLIEAAPNSEVPTNANGDLAWYFPCTTFNQDGKSEPNFTTPYYTGYSCHTSEKSRNAFYIDLKKSADVYFTWDDIKNSSRNLIVYSGNVLDLDLLHWFDSRQVTIPQRFEELRDTNTAANKAFRGRDVTRPFQSNGDKEIAECFEEIIKVGSIDTVTVGCIASRVVLYVFLALILSVVGSRFVLALIFQWFISRNYAAAKTSQSSDKRKRNQQIEDWSNDIYQAPARITGDIGSSVVTSDRSSKRGSTFMTTSRFSTVYGPDRGSSNKRVPTTMASSGGSGSQLLHPNSMYRQGNDSRSSFLRSDPYASNVPPSDGPGPAGFIHEAVVPQPPADWMPYGFPLAHTICLVTAYSEGAMGIRTTFDSIATTDYPNSHKVIIAICDGIIKGHGEEMATPDYVLAMMKDQTMAPEDVQPFSYVAVASGSKRHNMAKVYCGFYDYGAKSAIPVDKQQRVPMMLVVKCGTPDEATKSKPGNRGKRDSQIILMSFLQKIMFDERMTELEYEMFNGLWKVTGISPDFYECVLMVDADTKVFPDSLTHMLSAMVKDPEIMGLCGETKIANKRDSWVSAIQVFEYFISHHLAKSFESVFGGVTCLPGCFCMYRIKAPKGAQNYWVPILANPDVVEHYSENVVDTLHKKNLLLLGEDRYLSTLMLRTFPKRKQVFVPQAVCKTTVPDTFMVLLSQRRRWINSTIHNLMELVLVRDLCGTFCFSMQFIVFVELMGTLVLPAAIAFTFYVVIMSIVSKPVQVIPLILLALILGLPAVLIVITAHSWSYLVWMMIYLFSLPVWNFVLPVYAFWKFDDFSWGDTRKTAGETTKKAGLEYEGEFDSSKITMKRWAEFERERRSKANYWGSKENVVGGGNSWSMPPGHQYHDDYYSDA.

The interval 1 to 108 (MSLPERPGGI…NRIDKDHPNY (108 aa)) is disordered. Over residues 51–68 (LSANSFAETIPSPNNSFV) the composition is skewed to polar residues. Residue Asn-64 is glycosylated (N-linked (GlcNAc...) asparagine). The span at 94–107 (IRPERNRIDKDHPN) shows a compositional bias: basic and acidic residues. The N-linked (GlcNAc...) asparagine glycan is linked to Asn-116. The interval 136-199 (TTDVSGSRSQ…KSTKKRSTPQ (64 aa)) is disordered. Positions 137–154 (TDVSGSRSQTLDGVSDTS) are enriched in polar residues. Residues 176 to 196 (SAKRVSRHKSGKITKSTKKRS) show a composition bias toward basic residues. 2 consecutive transmembrane segments (helical) span residues 204 to 224 (PPSF…DFML) and 242 to 262 (MGLI…TFGF). Residues Asn-378 and Asn-418 are each glycosylated (N-linked (GlcNAc...) asparagine). A helical membrane pass occupies residues 509–529 (YVFLALILSVVGSRFVLALIF). The interval 595-662 (RFSTVYGPDR…PPSDGPGPAG (68 aa)) is disordered. Positions 608–643 (NKRVPTTMASSGGSGSQLLHPNSMYRQGNDSRSSFL) are enriched in polar residues. 2 N-linked (GlcNAc...) asparagine glycosylation sites follow: Asn-636 and Asn-1031. The next 3 helical transmembrane spans lie at 1056-1076 (FIVF…AFTF), 1090-1110 (VIPL…IVIT), and 1116-1136 (YLVW…VLPV). Residues 1201–1222 (GGGNSWSMPPGHQYHDDYYSDA) form a disordered region. Basic and acidic residues predominate over residues 1213–1222 (QYHDDYYSDA).

The protein belongs to the chitin synthase family. Class IV subfamily.

The protein resides in the cell membrane. It carries out the reaction [(1-&gt;4)-N-acetyl-beta-D-glucosaminyl](n) + UDP-N-acetyl-alpha-D-glucosamine = [(1-&gt;4)-N-acetyl-beta-D-glucosaminyl](n+1) + UDP + H(+). Functionally, polymerizes chitin, a structural polymer of the cell wall and septum, by transferring the sugar moiety of UDP-GlcNAc to the non-reducing end of the growing chitin polymer. Plays a role in cell wall integrity and is involved in tolerance to hyperosmotic conditions. Required to successfully penetrate the host plants and thus plays a key role in pathogenicity. This chain is Chitin synthase 4, found in Verticillium dahliae (strain VdLs.17 / ATCC MYA-4575 / FGSC 10137) (Verticillium wilt).